Consider the following 245-residue polypeptide: tRNA (guanine-N(1)-)-methyltransferase (245 aa).

Residues G111 and 131–136 contribute to the S-adenosyl-L-methionine site; that span reads MGDYVL.

Belongs to the RNA methyltransferase TrmD family. As to quaternary structure, homodimer.

It is found in the cytoplasm. The catalysed reaction is guanosine(37) in tRNA + S-adenosyl-L-methionine = N(1)-methylguanosine(37) in tRNA + S-adenosyl-L-homocysteine + H(+). Its function is as follows. Specifically methylates guanosine-37 in various tRNAs. This Staphylococcus aureus (strain Mu3 / ATCC 700698) protein is tRNA (guanine-N(1)-)-methyltransferase.